A 427-amino-acid chain; its full sequence is O-methyltransferase PaMT (427 aa).

S-adenosyl-L-methionine-binding residues include tryptophan 230 and aspartate 281. Residue histidine 326 is the Proton acceptor of the active site.

This sequence belongs to the class I-like SAM-binding methyltransferase superfamily. Cation-independent O-methyltransferase family. COMT subfamily. Requires S-adenosyl-L-methionine as cofactor.

It participates in mycotoxin biosynthesis. Its function is as follows. O-methyltransferase; part of the 2 gene clusters that mediate the biosynthesis of fusicoccins, diterpene glucosides that display phytohormone-like activity and function as potent activators of plasma membrane H(+)-ATPases in plants by modifying 14-3-3 proteins and cause the plant disease constriction canker. The first step in the pathway is performed by the fusicoccadiene synthase PaFS that possesses both prenyl transferase and terpene cyclase activity, converting isopentenyl diphosphate and dimethylallyl diphosphate into geranylgeranyl diphosphate (GGDP) and successively converting GGDP into fusicocca-2,10(14)-diene, a precursor for fusicoccin H. The second step is the oxidation at the C-8 position by the cytochrome P450 monooxygenase PaP450-2 to yield fusicocca-2,10(14)-diene-8-beta-ol. The cytochrome P450 monooxygenase PaP450-1 then catalyzes the hydroxylation at the C-16 position to produce fusicocca-2,10(14)-diene-8-beta,16-diol. The dioxygenase fc-dox then catalyzes the 16-oxydation of fusicocca-2,10(14)-diene-8-beta,16-diol to yield an aldehyde (8-beta-hydroxyfusicocca-1,10(14)-dien-16-al). The short-chain dehydrogenase/reductase fc-sdr catalyzes the reduction of the aldehyde to yield fusicocca-1,10(14)-diene-8-beta,16-diol. The next step is the hydroxylation at C-9 performed by the cytochrome P450 monooxygenase PaP450-3 that leads to fusicoccin H aglycon which is glycosylated to fusicoccin H by the O-glycosyltransferase PaGT. Hydroxylation at C-12 by the cytochrome P450 monooxygenase PaP450-4 leads then to the production of fusicoccin Q and is followed by methylation by the O-methyltransferase PaMT to yield fusicoccin P. Fusicoccin P is further converted to fusicoccin J via prenylation by the O-glucose prenyltransferase PaPT. Cytochrome P450 monooxygenase PaP450-5 then performs hydroxylation at C-19 to yield dideacetyl-fusicoccin A which is acetylated to 3'-O-deacetyl-fusicoccin A by the O-acetyltransferase PaAT-2. Finally, a another acetylation by the O-acetyltransferase PaAT-1 yields fusicoccin A. The protein is O-methyltransferase PaMT of Phomopsis amygdali (Fusicoccum amygdali).